Here is an 888-residue protein sequence, read N- to C-terminus: Dilute domain-containing protein YPR089W (888 aa).

The 386-residue stretch at 360-745 folds into the Dilute domain; it reads DIVLQSYWLS…KKFLNNKIKD (386 aa). 3 disordered regions span residues 462-504, 805-827, and 865-888; these read KEQQ…NNSS, KQRQ…TGDE, and LNIP…QNPW. Composition is skewed to polar residues over residues 809-823 and 867-880; these read NEPQ…TSDF and IPSS…WSNN.

It is found in the golgi apparatus. The chain is Dilute domain-containing protein YPR089W from Saccharomyces cerevisiae (strain ATCC 204508 / S288c) (Baker's yeast).